Here is a 1112-residue protein sequence, read N- to C-terminus: DNA polymerase II large subunit (1112 aa).

Belongs to the archaeal DNA polymerase II family. In terms of assembly, heterodimer of a large subunit and a small subunit.

The enzyme catalyses DNA(n) + a 2'-deoxyribonucleoside 5'-triphosphate = DNA(n+1) + diphosphate. The catalysed reaction is Exonucleolytic cleavage in the 3'- to 5'-direction to yield nucleoside 5'-phosphates.. In terms of biological role, possesses two activities: a DNA synthesis (polymerase) and an exonucleolytic activity that degrades single-stranded DNA in the 3'- to 5'-direction. Has a template-primer preference which is characteristic of a replicative DNA polymerase. The chain is DNA polymerase II large subunit from Cenarchaeum symbiosum (strain A).